The primary structure comprises 1854 residues: MVPEDDQNLTDDPSKLGHNVVSLFDQTQTRYSPKAAIVCGEHTLTYGALASDSDRLACLLLSRGISRGHVVALALDRTPDLIMFILGVLKAGATYVPVDPALPPERVNQMLDDEALRLVIVSPVSTKGGAGTGRYDYGNKAVCCTTSELQDQMRYQADKRPAVDIQPDDIAYILYTSGSTGKPKGVEIHHAAICNYALSVHQRPGCTDQDRVLFKSTISFDMAAFEIYVPLLCGATVVQAQAHDIRDPRALMHLIDRHSVTFSVATPTILQMMLDSGWCGTPGFSKLVTGGEALSPRLAERLTACVEEVWNLYGPTETTASVAAWKVQVGEDILIGTPNPNTRLYVLDADLQPVPVGSTGELYISGAGVARGYRNNPERTKAAFLPDPFWEGHTMYKSGDLACFLDSRRLAVIGRADTQIKIRGQRIDPGDVEASITAHADIANAVVVNRDERLVAYCIRKPGVGSAEVPLAKLLRPWLEDRLPGYMVPSFFVEVDRFPSTLNGKVDLRALPDPISTITPAKIPASTLTQQLLAIWTDVLGHGQIGMQDSFFHIGGNSASIIQIQTKLEKLLGRPVPVPKLYEHFTIANLAAYLSDQTQTNEVTEETKNPAGNDTTGEDIAVISMACRLPGDIHTPEELWKALISGTDAVTRVPEERWDADAIYDPDPEARGKSYSTGGGFVRDAMDFDAQFFGISPREARAIDPAQTMILETCWEGFERAGYGTKSLRGSQTGVFIGTGNSSVDDGQLSAAGTEKFEGHLGLGTAPSSLSGRVAYALGLEGPTMTLDAGCAASLVATHVACSALRQGECDMAVAGGVTFLPSPGLHIEFSRIRVASPDGRSRPFSADAAGMGLGEGASAVVLKRLSDAQRDNDHIHAIIRGSAVNHGGRGASMTAPSGPGQKRVVRAALAAARLKPYDIDYVEAHGTGTRLGDPVEASALAEVFSSSRDDITGPLRIGSSKSNIAHTQAAAGLAGLIKVALAMQHTMLPQTLHSSQPSPLIDWVGGKLQLLQRPMAWLPRTNDPTAPRRAGINSFGLSGTNAHAIIEEPPRAHSNANGADDDDNDDNARLPLPLPFLLSAYTSEALRQQAQKLCNHLSSATAQTKLSDVSYSLATTRTHFPRRIILAAQDKTELMGRLASIIDNGVPATADNNKTARVAMLFSGQGTERARMGKGLAERHLVFRNTVSHIAELFESVLEKPLLDVMWAEPESEAASLLRRTDYAQPAIFTLQVALWRLWQSWGVQPAVVLGHSVGEIAAAHVAGIMNLADACRLVAARGKLMHALPESGSMVALEAGVDEVTSAIEQLSARDRVSIASINTPTQVVASGEMDVIDKLAAYFEAQNRSSKILKTSRAFHSHHLDESMLALLRAVAETIVFQEQTLPIVSTVTGKLAEPGQLSSADYWVRQARNPVLFAEGMQTLADQGANCFVELGPASTLCGMGASCLDGDLSQTSKVAGREGAKNLVWLHSLNPKSDDALVIHNSLSDLHIRKVEIDWAAFFKDIGGRRIQLPTYAFQRHRYWLDGLRPIYSDKSSGQPSGQSPSGCPQPTGQIQVGWHTIDASSQYSNSTWGLLCPASDAPWMSPVKEALLHAGKQPVTVNQLAEAKAMSGVLCFWESDSEDDMISKASEQLQTVSRMKFSPWVVWVTRGAVGAGNMGEASLWGVMRSARVKYPQLCLRIVDLEGDVNIATATKLCSILMMSTEPECVVLGERVLVPRMQFQMQAQVQEVQKHSKLCVNGQETTNGATAAADPNGTDSFENKIRMAGPEERAMMLQGLVRGITAKALGVATAEEVDMHQGFMDVGVGSLGAIQMRKELSAQTGVKLPANLTRVYPDPISLSDALQKQVEGQ.

Residues 24-423 (FDQTQTRYSP…GRADTQIKIR (400 aa)) form an adenylation (A) domain region. The region spanning 523–598 (IPASTLTQQL…NLAAYLSDQT (76 aa)) is the Carrier 1 domain. At S558 the chain carries O-(pantetheine 4'-phosphoryl)serine. A Ketosynthase family 3 (KS3) domain is found at 617 to 1049 (GEDIAVISMA…GTNAHAIIEE (433 aa)). Active-site for beta-ketoacyl synthase activity residues include C791, H926, and H967. A malonyl-CoA:ACP transacylase (MAT) domain region spans residues 1162–1496 (LFSGQGTERA…SLSDLHIRKV (335 aa)). The interval 1536-1556 (KSSGQPSGQSPSGCPQPTGQI) is disordered. Over residues 1537 to 1555 (SSGQPSGQSPSGCPQPTGQ) the composition is skewed to low complexity. The region spanning 1776 to 1851 (MMLQGLVRGI…SLSDALQKQV (76 aa)) is the Carrier 2 domain. S1811 carries the O-(pantetheine 4'-phosphoryl)serine modification.

It in the C-terminal section; belongs to the NRP synthetase family.

Its pathway is secondary metabolite biosynthesis. PKS-NRPS hybrid synthetase; part of the gene cluster that mediates the biosynthesis of pyrophen and campyrone B, which represent a class of fungal amino acid-derived alpha-pyrone natural products. The first step of pyrophen biosynthesis is catalyzed by the PKS-NRPS hybrid synthetase ATPKS that uptakes and condensates L-phenylalanine and malonyl-CoA in order to produce desmethyldesacetylpyrophen. Although the A domain does not discriminate between 2 enantiomeric phenylalanines, the downstream KS domain must play a gate keeping role to stereoselectively accept the L-phenylalanyl-S-phosphopantetheine (Ppant)-T domain intermediate for chain elongation. The resulting amino acid derived diketide is off-loaded through lactonization to yield the alpha-pyrone intermediate desmethyldesacetylpyrophen. The cluster-specific O-methyltransferase (OMT) then methylates desmethyldesacetylpyrophen to desacetylpyrophen, which is further acetylated to pyrophen by an endogenous yet unidentified N-acetyltransferase. ATPKS has relaxed substrate specificity to activate and extend branched-chain amino acid L-leucine to produce small amounts of campyrone B. In Aspergillus niger (strain ATCC 1015 / CBS 113.46 / FGSC A1144 / LSHB Ac4 / NCTC 3858a / NRRL 328 / USDA 3528.7), this protein is PKS-NRPS hybrid synthetase ATPKS.